We begin with the raw amino-acid sequence, 487 residues long: uncharacterized protein (487 aa).

The protein belongs to the UbiD family.

This is an uncharacterized protein from Aeropyrum pernix (strain ATCC 700893 / DSM 11879 / JCM 9820 / NBRC 100138 / K1).